The sequence spans 351 residues: Biotin synthase (351 aa).

The region spanning 42-269 (NEVQVSTLLS…KSHVRLSAGR (228 aa)) is the Radical SAM core domain. Residues Cys-57, Cys-61, and Cys-64 each contribute to the [4Fe-4S] cluster site. [2Fe-2S] cluster-binding residues include Cys-101, Cys-132, Cys-192, and Arg-264.

This sequence belongs to the radical SAM superfamily. Biotin synthase family. Homodimer. It depends on [4Fe-4S] cluster as a cofactor. [2Fe-2S] cluster is required as a cofactor.

The catalysed reaction is (4R,5S)-dethiobiotin + (sulfur carrier)-SH + 2 reduced [2Fe-2S]-[ferredoxin] + 2 S-adenosyl-L-methionine = (sulfur carrier)-H + biotin + 2 5'-deoxyadenosine + 2 L-methionine + 2 oxidized [2Fe-2S]-[ferredoxin]. It functions in the pathway cofactor biosynthesis; biotin biosynthesis; biotin from 7,8-diaminononanoate: step 2/2. Its function is as follows. Catalyzes the conversion of dethiobiotin (DTB) to biotin by the insertion of a sulfur atom into dethiobiotin via a radical-based mechanism. This chain is Biotin synthase, found in Psychromonas ingrahamii (strain DSM 17664 / CCUG 51855 / 37).